We begin with the raw amino-acid sequence, 353 residues long: Virulence plasmid protein pGP2-D (353 aa).

The chain is Virulence plasmid protein pGP2-D from Chlamydia muridarum (strain MoPn / Nigg).